Here is a 103-residue protein sequence, read N- to C-terminus: uncharacterized protein (103 aa).

This is an uncharacterized protein from Saccharomyces cerevisiae (strain ATCC 204508 / S288c) (Baker's yeast).